The sequence spans 119 residues: Translation initiation factor 1A (119 aa).

The tract at residues 1–24 (MSEDDVDNSVKDFESGEENEESIG) is disordered. Positions 24-98 (GRVILPNKKK…EKADVVYRYT (75 aa)) constitute an S1-like domain.

This sequence belongs to the eIF-1A family.

In terms of biological role, seems to be required for maximal rate of protein biosynthesis. Enhances ribosome dissociation into subunits and stabilizes the binding of the initiator Met-tRNA(I) to 40 S ribosomal subunits. The protein is Translation initiation factor 1A (eIF1A) of Thermoplasma acidophilum (strain ATCC 25905 / DSM 1728 / JCM 9062 / NBRC 15155 / AMRC-C165).